The primary structure comprises 37 residues: Large ribosomal subunit protein bL36c (37 aa).

This sequence belongs to the bacterial ribosomal protein bL36 family.

The protein localises to the plastid. It is found in the chloroplast. In Staurastrum punctulatum (Green alga), this protein is Large ribosomal subunit protein bL36c.